The chain runs to 210 residues: Thymidylate kinase (210 aa).

Residue 10–17 (GPEGAGKS) coordinates ATP.

The protein belongs to the thymidylate kinase family.

The catalysed reaction is dTMP + ATP = dTDP + ADP. Functionally, phosphorylation of dTMP to form dTDP in both de novo and salvage pathways of dTTP synthesis. The chain is Thymidylate kinase from Pseudomonas entomophila (strain L48).